The following is a 164-amino-acid chain: Large ribosomal subunit protein uL15 (164 aa).

Disordered stretches follow at residues 1 to 49 and 143 to 164; these read MTKL…SIAG and EKAGGKLTTTKPEAAQDASAEA. A compositionally biased stretch (gly residues) spans 22–36; it reads RGPGSGKGKTAGRGV.

Belongs to the universal ribosomal protein uL15 family. Part of the 50S ribosomal subunit.

Binds to the 23S rRNA. The polypeptide is Large ribosomal subunit protein uL15 (Phenylobacterium zucineum (strain HLK1)).